Reading from the N-terminus, the 403-residue chain is uncharacterized protein (403 aa).

Positions 55-88 (LTGSPNPQATPKQENKSNFFSEKQSVRENGNSSA) are enriched in polar residues. Residues 55 to 95 (LTGSPNPQATPKQENKSNFFSEKQSVRENGNSSAGEKKQKW) form a disordered region. Serine 58 is modified (phosphoserine). One can recognise a J domain in the interval 113-177 (QYYEILDLKK…NLRAHYDRTG (65 aa)). Residues 263–283 (SIFYQLLPLIVVILFAFLSNF) form a helical membrane-spanning segment.

The protein resides in the endoplasmic reticulum membrane. This is an uncharacterized protein from Schizosaccharomyces pombe (strain 972 / ATCC 24843) (Fission yeast).